A 252-amino-acid polypeptide reads, in one-letter code: Large ribosomal subunit protein uL4 (252 aa).

This sequence belongs to the universal ribosomal protein uL4 family. In terms of assembly, part of the 50S ribosomal subunit.

In terms of biological role, one of the primary rRNA binding proteins, this protein initially binds near the 5'-end of the 23S rRNA. It is important during the early stages of 50S assembly. It makes multiple contacts with different domains of the 23S rRNA in the assembled 50S subunit and ribosome. Functionally, forms part of the polypeptide exit tunnel. In Methanococcus maripaludis (strain C6 / ATCC BAA-1332), this protein is Large ribosomal subunit protein uL4.